A 490-amino-acid polypeptide reads, in one-letter code: Betaine aldehyde dehydrogenase (490 aa).

K(+)-binding residues include serine 26, isoleucine 27, and aspartate 93. 150 to 152 lines the NAD(+) pocket; the sequence is GAW. Catalysis depends on lysine 162, which acts as the Charge relay system. NAD(+) is bound by residues 176-179 and 230-233; these read KPSE and GVET. Leucine 246 serves as a coordination point for K(+). The active-site Proton acceptor is the glutamate 252. NAD(+) is bound by residues glycine 254, cysteine 286, and glutamate 387. Cysteine 286 functions as the Nucleophile in the catalytic mechanism. Cysteine sulfenic acid (-SOH) is present on cysteine 286. Residues lysine 457 and glycine 460 each contribute to the K(+) site. Glutamate 464 functions as the Charge relay system in the catalytic mechanism.

Belongs to the aldehyde dehydrogenase family. In terms of assembly, dimer of dimers. It depends on K(+) as a cofactor.

It carries out the reaction betaine aldehyde + NAD(+) + H2O = glycine betaine + NADH + 2 H(+). It functions in the pathway amine and polyamine biosynthesis; betaine biosynthesis via choline pathway; betaine from betaine aldehyde: step 1/1. In terms of biological role, involved in the biosynthesis of the osmoprotectant glycine betaine. Catalyzes the irreversible oxidation of betaine aldehyde to the corresponding acid. The protein is Betaine aldehyde dehydrogenase of Acinetobacter baumannii (strain ACICU).